Reading from the N-terminus, the 205-residue chain is Proteasome subunit beta type-3 (205 aa).

It belongs to the peptidase T1B family. In terms of assembly, the 26S proteasome consists of a 20S proteasome core and two 19S regulatory subunits. The 20S proteasome core is composed of 28 subunits that are arranged in four stacked rings, resulting in a barrel-shaped structure. The two end rings are each formed by seven alpha subunits, and the two central rings are each formed by seven beta subunits. The catalytic chamber with the active sites is on the inside of the barrel.

It localises to the cytoplasm. The protein localises to the nucleus. Non-catalytic component of the proteasome, a multicatalytic proteinase complex which is characterized by its ability to cleave peptides with Arg, Phe, Tyr, Leu, and Glu adjacent to the leaving group at neutral or slightly basic pH. The proteasome has an ATP-dependent proteolytic activity. In Dictyostelium discoideum (Social amoeba), this protein is Proteasome subunit beta type-3 (psmB3).